The chain runs to 146 residues: Leptin (146 aa).

A disulfide bridge connects residues Cys-96 and Cys-146.

This sequence belongs to the leptin family.

It localises to the secreted. Functionally, key player in the regulation of energy balance and body weight control. Once released into the circulation, has central and peripheral effects by binding LEPR, found in many tissues, which results in the activation of several major signaling pathways. In the hypothalamus, acts as an appetite-regulating factor that induces a decrease in food intake and an increase in energy consumption by inducing anorexinogenic factors and suppressing orexigenic neuropeptides, also regulates bone mass and secretion of hypothalamo-pituitary-adrenal hormones. In the periphery, increases basal metabolism, influences reproductive function, regulates pancreatic beta-cell function and insulin secretion, is pro-angiogenic for endothelial cell and affects innate and adaptive immunity. In the arcuate nucleus of the hypothalamus, activates by depolarization POMC neurons inducing FOS and SOCS3 expression to release anorexigenic peptides and inhibits by hyperpolarization NPY neurons inducing SOCS3 with a consequent reduction on release of orexigenic peptides. In addition to its known satiety inducing effect, has a modulatory role in nutrient absorption. In the intestine, reduces glucose absorption by enterocytes by activating PKC and leading to a sequential activation of p38, PI3K and ERK signaling pathways which exerts an inhibitory effect on glucose absorption. Acts as a growth factor on certain tissues, through the activation of different signaling pathways increases expression of genes involved in cell cycle regulation such as CCND1, via JAK2-STAT3 pathway, or VEGFA, via MAPK1/3 and PI3K-AKT1 pathways. May also play an apoptotic role via JAK2-STAT3 pathway and up-regulation of BIRC5 expression. Pro-angiogenic, has mitogenic activity on vascular endothelial cells and plays a role in matrix remodeling by regulating the expression of matrix metalloproteinases (MMPs) and tissue inhibitors of metalloproteinases (TIMPs). In innate immunity, modulates the activity and function of neutrophils by increasing chemotaxis and the secretion of oxygen radicals. Increases phagocytosis by macrophages and enhances secretion of pro-inflammatory mediators. Increases cytotoxic ability of NK cells. Plays a pro-inflammatory role, in synergy with IL1B, by inducing NOS2 which promotes the production of IL6, IL8 and Prostaglandin E2, through a signaling pathway that involves JAK2, PI3K, MAP2K1/MEK1 and MAPK14/p38. In adaptive immunity, promotes the switch of memory T-cells towards T helper-1 cell immune responses. Increases CD4(+)CD25(-) T-cell proliferation and reduces autophagy during TCR (T-cell receptor) stimulation, through MTOR signaling pathway activation and BCL2 up-regulation. This is Leptin (LEP) from Pan troglodytes (Chimpanzee).